A 142-amino-acid chain; its full sequence is Large ribosomal subunit protein uL13 (142 aa).

The protein belongs to the universal ribosomal protein uL13 family. As to quaternary structure, part of the 50S ribosomal subunit.

In terms of biological role, this protein is one of the early assembly proteins of the 50S ribosomal subunit, although it is not seen to bind rRNA by itself. It is important during the early stages of 50S assembly. This Saccharophagus degradans (strain 2-40 / ATCC 43961 / DSM 17024) protein is Large ribosomal subunit protein uL13.